A 213-amino-acid chain; its full sequence is Glycerol-3-phosphate acyltransferase (213 aa).

The next 6 membrane-spanning stretches (helical) occupy residues 2-22 (ITIV…GLWI), 52-74 (AGMA…PIIF), 81-100 (PLIF…FAGF), 112-132 (VIFG…FGAL), 143-163 (VTAS…GFIL), and 164-184 (SNYD…IIIR).

The protein belongs to the PlsY family. In terms of assembly, probably interacts with PlsX.

It is found in the cell membrane. The enzyme catalyses an acyl phosphate + sn-glycerol 3-phosphate = a 1-acyl-sn-glycero-3-phosphate + phosphate. Its pathway is lipid metabolism; phospholipid metabolism. Catalyzes the transfer of an acyl group from acyl-phosphate (acyl-PO(4)) to glycerol-3-phosphate (G3P) to form lysophosphatidic acid (LPA). This enzyme utilizes acyl-phosphate as fatty acyl donor, but not acyl-CoA or acyl-ACP. In Streptococcus pneumoniae (strain ATCC 700669 / Spain 23F-1), this protein is Glycerol-3-phosphate acyltransferase.